The sequence spans 378 residues: Schlafen family member 2 (378 aa).

It belongs to the Schlafen family. In terms of tissue distribution, mainly expressed in the thymus, lymph node and spleen.

Its subcellular location is the cytoplasm. TRNA-binding protein involved in T-cell mediated immunity. Plays a key role during the metabolic reprograming phase of activated T-cell, when T-cells produce reactive oxygen species (ROS): acts by binding tRNAs and protecting them from cleavage by the oxidative stress-activated ribonuclease angiogenin (ANG). Also required for T-cell quiescence maintenance. The chain is Schlafen family member 2 from Mus musculus (Mouse).